The primary structure comprises 91 residues: MSDYNMVAVVKVMPTDPEVNLDELEAKLKEVLPEKFGLAKVEREPIAFGLVALKFYVLAKDEEGYDLDQVLEAFRQVENVESAEVETVSRI.

The protein belongs to the EF-1-beta/EF-1-delta family.

Functionally, promotes the exchange of GDP for GTP in EF-1-alpha/GDP, thus allowing the regeneration of EF-1-alpha/GTP that could then be used to form the ternary complex EF-1-alpha/GTP/AAtRNA. The polypeptide is Elongation factor 1-beta (Thermococcus gammatolerans (strain DSM 15229 / JCM 11827 / EJ3)).